We begin with the raw amino-acid sequence, 384 residues long: PqqA peptide cyclase (384 aa).

Residues 15–231 (PGPPLWLLAE…NQWRDKLAAE (217 aa)) form the Radical SAM core domain. [4Fe-4S] cluster contacts are provided by cysteine 29, cysteine 33, and cysteine 36.

It belongs to the radical SAM superfamily. PqqE family. Interacts with PqqD. The interaction is necessary for activity of PqqE. [4Fe-4S] cluster serves as cofactor.

It catalyses the reaction [PQQ precursor protein] + S-adenosyl-L-methionine = E-Y cross-linked-[PQQ precursor protein] + 5'-deoxyadenosine + L-methionine + H(+). The protein operates within cofactor biosynthesis; pyrroloquinoline quinone biosynthesis. In terms of biological role, catalyzes the cross-linking of a glutamate residue and a tyrosine residue in the PqqA protein as part of the biosynthesis of pyrroloquinoline quinone (PQQ). The chain is PqqA peptide cyclase from Ectopseudomonas mendocina (strain ymp) (Pseudomonas mendocina).